The primary structure comprises 359 residues: Phospho-N-acetylmuramoyl-pentapeptide-transferase (359 aa).

10 helical membrane passes run 3–23, 55–75, 80–100, 117–137, 156–176, 187–207, 231–251, 255–275, 280–300, and 334–354; these read QIMI…PALI, VAIL…GLAF, ITAS…VGFL, TAKT…VLQF, IATV…VVSA, LDGL…LITF, LALI…WNAA, IFMG…LSVT, ILAV…VLQI, and FWLL…GEWL.

Belongs to the glycosyltransferase 4 family. MraY subfamily. The cofactor is Mg(2+).

The protein resides in the cell membrane. The enzyme catalyses UDP-N-acetyl-alpha-D-muramoyl-L-alanyl-gamma-D-glutamyl-meso-2,6-diaminopimeloyl-D-alanyl-D-alanine + di-trans,octa-cis-undecaprenyl phosphate = di-trans,octa-cis-undecaprenyl diphospho-N-acetyl-alpha-D-muramoyl-L-alanyl-D-glutamyl-meso-2,6-diaminopimeloyl-D-alanyl-D-alanine + UMP. Its pathway is cell wall biogenesis; peptidoglycan biosynthesis. Catalyzes the initial step of the lipid cycle reactions in the biosynthesis of the cell wall peptidoglycan: transfers peptidoglycan precursor phospho-MurNAc-pentapeptide from UDP-MurNAc-pentapeptide onto the lipid carrier undecaprenyl phosphate, yielding undecaprenyl-pyrophosphoryl-MurNAc-pentapeptide, known as lipid I. The sequence is that of Phospho-N-acetylmuramoyl-pentapeptide-transferase from Mycobacterium ulcerans (strain Agy99).